A 61-amino-acid chain; its full sequence is SPbeta prophage-derived uncharacterized protein YotK (61 aa).

Positions 7-57 (SIQTLLNKMDRQMKTVKEAIEEKDLQRAHRNLINLADNNEELMQEIRWVKK) form a coiled coil.

The sequence is that of SPbeta prophage-derived uncharacterized protein YotK (yotK) from Bacillus subtilis (strain 168).